Consider the following 402-residue polypeptide: Protein PMR5 (402 aa).

The chain crosses the membrane as a helical; Signal-anchor for type II membrane protein span at residues 7 to 23; the sequence is LLGISVVSAIFFLVLQQ. Residues 40–60 are disordered; sequence GSSSGSSGNQYSSSRPSAGFQ. Over residues 41–56 the composition is skewed to low complexity; that stretch reads SSSGSSGNQYSSSRPS. The GDS motif signature appears at 140-142; sequence GDS. Positions 379 to 393 match the DCXHWCLPGXXDXWN motif motif; it reads DCSHWCLPGLPDTWN.

The protein belongs to the PC-esterase family. TBL subfamily. As to expression, expressed in flowers, siliques, stems and leaves.

The protein resides in the membrane. Required for nonhost resistance (NHR) during plant-microbe interactions. Plants mutated in PMR5 are resistant to powdery mildew species. May act as a bridging protein that binds pectin and other cell wall polysaccharides. Probably involved in maintaining esterification of pectins. May be involved in the specific O-acetylation of cell wall polymers. This is Protein PMR5 (PMR5) from Arabidopsis thaliana (Mouse-ear cress).